The sequence spans 342 residues: ATPase asna-1 (342 aa).

26 to 33 (KGGVGKTT) is an ATP binding site. Aspartate 55 is an active-site residue. Glutamate 243 and asparagine 270 together coordinate ATP. Positions 285 and 288 each coordinate Zn(2+).

This sequence belongs to the arsA ATPase family. In terms of assembly, homodimer.

Its subcellular location is the cytoplasm. The protein localises to the endoplasmic reticulum. Functionally, ATPase required for the post-translational delivery of tail-anchored (TA) proteins to the endoplasmic reticulum. Recognizes and selectively binds the transmembrane domain of TA proteins in the cytosol. This complex then targets to the endoplasmic reticulum by membrane-bound receptors, where the tail-anchored protein is released for insertion. This process is regulated by ATP binding and hydrolysis. ATP binding drives the homodimer towards the closed dimer state, facilitating recognition of newly synthesized TA membrane proteins. ATP hydrolysis is required for insertion. Subsequently, the homodimer reverts towards the open dimer state, lowering its affinity for the membrane-bound receptor, and returning it to the cytosol to initiate a new round of targeting. May be involved in insulin signaling. The chain is ATPase asna-1 from Caenorhabditis elegans.